The sequence spans 219 residues: Thymidylate kinase (219 aa).

7 to 14 (GIDGAGKS) contributes to the ATP binding site.

The protein belongs to the thymidylate kinase family.

It catalyses the reaction dTMP + ATP = dTDP + ADP. In terms of biological role, phosphorylation of dTMP to form dTDP in both de novo and salvage pathways of dTTP synthesis. In Chlorobium phaeobacteroides (strain DSM 266 / SMG 266 / 2430), this protein is Thymidylate kinase.